The sequence spans 311 residues: Cell division protein FtsQ (311 aa).

The disordered stretch occupies residues 1–28 (MTTRSPARPLIARRSTPAPTPAPHDPAP). Over 1–46 (MTTRSPARPLIARRSTPAPTPAPHDPAPSRLSYRVTRLWLTPIFRK) the chain is Cytoplasmic. A helical membrane pass occupies residues 47–67 (ALHLGIPVFALFAAVTWYLGD). Over 68–311 (ETRVAELFEA…AERPDGDTRG (244 aa)) the chain is Periplasmic. The POTRA domain maps to 91–159 (FRVNVLGIDG…GYLAVRIDER (69 aa)).

This sequence belongs to the FtsQ/DivIB family. FtsQ subfamily.

The protein resides in the cell inner membrane. Its function is as follows. Essential cell division protein. The sequence is that of Cell division protein FtsQ from Jannaschia sp. (strain CCS1).